A 118-amino-acid chain; its full sequence is Large ribosomal subunit protein bL19 (118 aa).

Belongs to the bacterial ribosomal protein bL19 family.

Functionally, this protein is located at the 30S-50S ribosomal subunit interface and may play a role in the structure and function of the aminoacyl-tRNA binding site. This chain is Large ribosomal subunit protein bL19, found in Salinispora arenicola (strain CNS-205).